A 264-amino-acid polypeptide reads, in one-letter code: 3-methyl-2-oxobutanoate hydroxymethyltransferase (264 aa).

Mg(2+) is bound by residues Asp45 and Asp84. 3-methyl-2-oxobutanoate contacts are provided by residues 45-46 (DS), Asp84, and Lys112. Glu114 lines the Mg(2+) pocket. The Proton acceptor role is filled by Glu181.

The protein belongs to the PanB family. In terms of assembly, homodecamer; pentamer of dimers. Requires Mg(2+) as cofactor.

The protein resides in the cytoplasm. It catalyses the reaction 3-methyl-2-oxobutanoate + (6R)-5,10-methylene-5,6,7,8-tetrahydrofolate + H2O = 2-dehydropantoate + (6S)-5,6,7,8-tetrahydrofolate. It participates in cofactor biosynthesis; (R)-pantothenate biosynthesis; (R)-pantoate from 3-methyl-2-oxobutanoate: step 1/2. Catalyzes the reversible reaction in which hydroxymethyl group from 5,10-methylenetetrahydrofolate is transferred onto alpha-ketoisovalerate to form ketopantoate. This is 3-methyl-2-oxobutanoate hydroxymethyltransferase from Shewanella frigidimarina (strain NCIMB 400).